The primary structure comprises 215 residues: MVLTIYAPLFASSKRAVVTLVEKGVSFETVNVDLMKGEQRQPEYLAIQPFGKIPVLVDGDYKIFESRAIMRYIAEKYRSQGPDLLGKTIEERGQVEQWLDVEATSYHPPLLALTLNIVFAPLMGFPADEKVIKESEEKLAEVLDVYEAQLSKNEYLAGDFVSLADLAHLPFTEYLVGPIGKAHLIKDRKHVSAWWDKISSRAAWKEVSAKYSLPV.

One can recognise a GST N-terminal domain in the interval 2–81; that stretch reads VLTIYAPLFA…YIAEKYRSQG (80 aa). Glutathione is bound by residues 11-12, 39-40, 52-53, and 65-66; these read AS, QR, KI, and ES. The GST C-terminal domain occupies 88–215; that stretch reads TIEERGQVEQ…EVSAKYSLPV (128 aa).

This sequence belongs to the GST superfamily. Phi family. Interacts with BAK1. As to expression, expressed in roots, stems, floral buds, mature flowers and leaves.

The protein localises to the cytoplasm. It is found in the cytosol. The enzyme catalyses RX + glutathione = an S-substituted glutathione + a halide anion + H(+). In vitro, possesses glutathione S-transferase activity toward 1-chloro-2,4-dinitrobenzene (CDNB) and benzyl isothiocyanate (BITC). May be involved in the conjugation of reduced glutathione to a wide number of exogenous and endogenous hydrophobic electrophiles and have a detoxification role against certain herbicides. The protein is Glutathione S-transferase F10 of Arabidopsis thaliana (Mouse-ear cress).